A 243-amino-acid chain; its full sequence is Terpene cyclase atmB (243 aa).

7 helical membrane-spanning segments follow: residues 19–39 (IADVFVIGMGIGWIINYVGMV), 48–68 (YGMAIMPLCCNIAWEIVYGLI), 78–98 (GVFLSGLTINLGVIYTAIKFG), 112–132 (LPLIFMLGILGFLTGHLALAA), 134–154 (IGPALAYNWGAAFCQLLLSVG), 169–189 (SYTLWLSRFLGSFSVVISAWL), and 205–225 (LILWCLFAWLVVDGSYGVCFY).

It belongs to the paxB family.

Its subcellular location is the membrane. Its function is as follows. Terpene cyclase; part of the ATM2 gene cluster that mediates the biosynthesis of aflatrem, a tremorgenic mycotoxin with acute neurotoxic effects. Synthesis of geranylgeranyl diphosphate (GGPP) by AtmG (a GGPP synthase) precedes condensation of GGPP with indole 3-glycerol phosphate, followed by epoxidation and cyclization by AtmM (a FAD-dependent monooxygenase) and AtmC (a prenyltransferase) to produce paspaline. AtmB is also essential for paspaline production, but its exact role has not been identified yet. AtmP, a cytochrome P450 monooxygenase, subsequently converts paspaline to 13-desoxypaxilline via PC-M6 by removal of the C-30 methyl group and oxidation at C-10. AtmQ, a cytochrome P450 monooxygenase, then catalyzes the oxidation of 13-desoxypaxilline, first at C-7 to produce paspalicine and then at C-13 to form paspalinine. Finally, AtmD prenylates paspalinine to form aflatrem. The chain is Terpene cyclase atmB from Aspergillus flavus.